Consider the following 135-residue polypeptide: Classical arabinogalactan protein 4 (135 aa).

The signal sequence occupies residues 1–21; that stretch reads MGSKIVQVFLMLALFATSALA. The residue at position 22 (Gln22) is a Pyrrolidone carboxylic acid. The tract at residues 22 to 112 is disordered; sequence QAPAPTPTAT…PSDASPAPSA (91 aa). 9 positions are modified to 4-hydroxyproline: Pro24, Pro26, Pro28, Pro32, Pro33, Pro34, Pro37, Pro38, and Pro39. 9 O-linked (Ara...) hydroxyproline glycosylation sites follow: Pro24, Pro26, Pro28, Pro32, Pro33, Pro34, Pro37, Pro38, and Pro39. Pro residues predominate over residues 25-76; sequence APTPTATPPPATPPPVATPPPVATPPPAATPAPATPPPAATPAPATTPPSVA. The span at 96 to 112 shows a compositional bias: low complexity; sequence SPSSAPGPSDASPAPSA. A lipid anchor (GPI-anchor amidated serine) is attached at Ser111. Residues 112–135 constitute a propeptide, removed in mature form; sequence AAFSNKAFFAGTAFAAIMYAAVLA.

Belongs to the classical AGP family. In terms of processing, O-glycosylated on hydroxyprolines; noncontiguous hydroxylproline residues are glycosylated with arabinogalactan. As to expression, highly expressed in roots, flowers and leaves.

It is found in the cell membrane. Its function is as follows. Proteoglycan that seems to be implicated in diverse developmental roles such as differentiation, cell-cell recognition, embryogenesis and programmed cell death. In Arabidopsis thaliana (Mouse-ear cress), this protein is Classical arabinogalactan protein 4 (AGP4).